The primary structure comprises 118 residues: UPF0102 protein RHA1_ro06551 (118 aa).

This sequence belongs to the UPF0102 family.

The polypeptide is UPF0102 protein RHA1_ro06551 (Rhodococcus jostii (strain RHA1)).